Here is a 325-residue protein sequence, read N- to C-terminus: BTB/POZ domain-containing protein KCTD12 (325 aa).

Positions 1–28 (MALADSTRGLPNGGGGGGGSGSSSSSAE) are disordered. Ala-2 bears the N-acetylalanine mark. Positions 11–21 (PNGGGGGGGSG) are enriched in gly residues. At Tyr-119 the chain carries Phosphotyrosine. The tract at residues 129–202 (LGAPQQPGPG…PLLTPSQSLD (74 aa)) is disordered. 3 positions are modified to phosphoserine: Ser-151, Ser-171, and Ser-185. Thr-196 carries the phosphothreonine modification. Position 200 is a phosphoserine (Ser-200).

Interacts as a tetramer with GABBR1 and GABBR2. Present in a variety of fetal organs, with highest expression levels in the cochlea and brain and, in stark contrast, is detected only at extremely low levels in adult organs, such as brain and lung.

It localises to the presynaptic cell membrane. The protein localises to the postsynaptic cell membrane. In terms of biological role, auxiliary subunit of GABA-B receptors that determine the pharmacology and kinetics of the receptor response. Increases agonist potency and markedly alter the G-protein signaling of the receptors by accelerating onset and promoting desensitization. The polypeptide is BTB/POZ domain-containing protein KCTD12 (KCTD12) (Homo sapiens (Human)).